The primary structure comprises 177 residues: ATP-dependent protease subunit HslV (177 aa).

Threonine 7 is an active-site residue. Na(+)-binding residues include alanine 162, cysteine 165, and threonine 168.

It belongs to the peptidase T1B family. HslV subfamily. A double ring-shaped homohexamer of HslV is capped on each side by a ring-shaped HslU homohexamer. The assembly of the HslU/HslV complex is dependent on binding of ATP.

It localises to the cytoplasm. It carries out the reaction ATP-dependent cleavage of peptide bonds with broad specificity.. With respect to regulation, allosterically activated by HslU binding. Functionally, protease subunit of a proteasome-like degradation complex believed to be a general protein degrading machinery. The protein is ATP-dependent protease subunit HslV of Thioalkalivibrio sulfidiphilus (strain HL-EbGR7).